The sequence spans 233 residues: Ribonuclease 3 (233 aa).

An RNase III domain is found at 4-126 (LNKLMERLGH…IVGAIYIDAG (123 aa)). E39 provides a ligand contact to Mg(2+). Residue D43 is part of the active site. D112 and E115 together coordinate Mg(2+). Residue E115 is part of the active site. Residues 153-222 (DAKSLLQEWL…AKRFLELLDD (70 aa)) enclose the DRBM domain.

This sequence belongs to the ribonuclease III family. In terms of assembly, homodimer. It depends on Mg(2+) as a cofactor.

It is found in the cytoplasm. The catalysed reaction is Endonucleolytic cleavage to 5'-phosphomonoester.. Its function is as follows. Digests double-stranded RNA. Involved in the processing of primary rRNA transcript to yield the immediate precursors to the large and small rRNAs (23S and 16S). Processes some mRNAs, and tRNAs when they are encoded in the rRNA operon. Processes pre-crRNA and tracrRNA of type II CRISPR loci if present in the organism. This is Ribonuclease 3 from Coxiella burnetii (strain Dugway 5J108-111).